Consider the following 692-residue polypeptide: Elongation factor G (692 aa).

Residues 8–282 (ENTRNIGIMA…AVLDYLPSPL (275 aa)) form the tr-type G domain. Residues 17–24 (AHIDAGKT), 81–85 (DTPGH), and 135–138 (NKMD) contribute to the GTP site.

The protein belongs to the TRAFAC class translation factor GTPase superfamily. Classic translation factor GTPase family. EF-G/EF-2 subfamily.

It localises to the cytoplasm. Functionally, catalyzes the GTP-dependent ribosomal translocation step during translation elongation. During this step, the ribosome changes from the pre-translocational (PRE) to the post-translocational (POST) state as the newly formed A-site-bound peptidyl-tRNA and P-site-bound deacylated tRNA move to the P and E sites, respectively. Catalyzes the coordinated movement of the two tRNA molecules, the mRNA and conformational changes in the ribosome. In Halalkalibacterium halodurans (strain ATCC BAA-125 / DSM 18197 / FERM 7344 / JCM 9153 / C-125) (Bacillus halodurans), this protein is Elongation factor G (fusA).